Here is a 210-residue protein sequence, read N- to C-terminus: Large ribosomal subunit protein uL3 (210 aa).

Residues 139–165 form a disordered region; sequence AEKVHRSPGSIGHATFPGKVFKGKKMP.

The protein belongs to the universal ribosomal protein uL3 family. In terms of assembly, part of the 50S ribosomal subunit. Forms a cluster with proteins L14 and L19.

Its function is as follows. One of the primary rRNA binding proteins, it binds directly near the 3'-end of the 23S rRNA, where it nucleates assembly of the 50S subunit. In Maridesulfovibrio salexigens (strain ATCC 14822 / DSM 2638 / NCIMB 8403 / VKM B-1763) (Desulfovibrio salexigens), this protein is Large ribosomal subunit protein uL3.